The chain runs to 756 residues: MKGKTVNKQTLAALVSALLVFNPAVADEQESAQMTKPKGAAATGTAKAFQPKSKQFWWPDQLDLSPLRDHDSRSNPYGESFDYAKAFNSLDLDQVKADIDQLLTQSQDWWPADYGNYGPFFIRMTWHSAGTYRTLDGRGGAGGGQQRFEPLNSWPDNASLDKARRLLWPVKQKYGEALSWSDLIVLAGNVALENMGFKTFGFAGGRNDDWEPDMVYWGPEVEMLASDREDRDGKLQRPLGATHMGLIYVNPEGPKGVPDPLGSAKNIRTAFSRMAMNDEETLALIAGGHTFGKMHGAHKPKDCLGAEPAAAGIEAQGLGWHNKCGKGHSEDTITSGLEGAWTQAPTKWTSLYLSNLLTYDWQQTRSPAGAIQWIPTDESVHKAVPDAHVKGKFHAPVMTTADLALKYDPEYRKIAERFLADPEEYRLAFAKAWYKLTHRDMGPARNFLGKEVPQGNFIWQDPIDDKTQSRLSAGDIKQLKKAISKSGLSVAERVRLAWASAASYRQSDMRGGANGARIALAPQKDWTVNNPAETAKVLKTLEAIRADFNKGAGKRQVSLADLIVLAGASALEQAAKQAGFEVAVPFTPGRGDATQAQTDENSFSLLELHADGFRNYFDVNHSYKSPTEMLVDKADQLDLTVPEMTVLVGGLRALDANYQGAKHGVLTQRPGTLNNDFFVNLLDMSTLWQKSDVDGIYQGLDRSSGKPKWTATSVDLIFGSNSELRAVAEVYAFDTSKQKFVDDFVAAWVKVMNLDR.

A signal peptide spans Met-1–Ala-26. A cross-link (tryptophyl-tyrosyl-methioninium (Trp-Tyr) (with M-274)) is located at residues Trp-126–Tyr-248. His-127 acts as the Proton acceptor in catalysis. Residues Tyr-248–Met-274 constitute a cross-link (tryptophyl-tyrosyl-methioninium (Tyr-Met) (with W-126)). His-289 contributes to the heme b binding site.

Belongs to the peroxidase family. Peroxidase/catalase subfamily. In terms of assembly, homodimer or homotetramer. Heme b serves as cofactor. Post-translationally, formation of the three residue Trp-Tyr-Met cross-link is important for the catalase, but not the peroxidase activity of the enzyme.

It carries out the reaction H2O2 + AH2 = A + 2 H2O. It catalyses the reaction 2 H2O2 = O2 + 2 H2O. Functionally, bifunctional enzyme with both catalase and broad-spectrum peroxidase activity. This Shewanella loihica (strain ATCC BAA-1088 / PV-4) protein is Catalase-peroxidase.